A 308-amino-acid chain; its full sequence is Dual oxidase maturation factor 1 (308 aa).

Over M1–K21 the chain is Extracellular. Residues I22–G42 form a helical membrane-spanning segment. At I43–S49 the chain is on the cytoplasmic side. The chain crosses the membrane as a helical span at residues I50–F70. Residues T71 to S91 are Extracellular-facing. A helical membrane pass occupies residues M92–G112. Residues N113–T175 are Cytoplasmic-facing. Residues Y176 to M198 traverse the membrane as a helical segment. A topological domain (extracellular) is located at residue P199. Residues V200–I220 form a helical membrane-spanning segment. The Cytoplasmic segment spans residues S221 to S247. Residues Y248 to L268 form a helical membrane-spanning segment. Residues Y269–L308 are Extracellular-facing. N-linked (GlcNAc...) asparagine glycosylation occurs at N290.

The protein belongs to the DUOXA family.

Its subcellular location is the membrane. In terms of biological role, possible role in maturation and transport from the endoplasmic reticulum to the plasma membrane of functional dual oxidase. This Xenopus laevis (African clawed frog) protein is Dual oxidase maturation factor 1 (duoxa1).